Consider the following 437-residue polypeptide: Phosphomethylpyrimidine synthase (437 aa).

Residues asparagine 69, methionine 98, tyrosine 127, histidine 163, 185–187, 226–229, and glutamate 265 each bind substrate; these read SRG and DACR. Histidine 269 lines the Zn(2+) pocket. Tyrosine 292 contributes to the substrate binding site. Residue histidine 333 participates in Zn(2+) binding. The [4Fe-4S] cluster site is built by cysteine 409, cysteine 412, and cysteine 416.

Belongs to the ThiC family. [4Fe-4S] cluster is required as a cofactor.

The catalysed reaction is 5-amino-1-(5-phospho-beta-D-ribosyl)imidazole + S-adenosyl-L-methionine = 4-amino-2-methyl-5-(phosphooxymethyl)pyrimidine + CO + 5'-deoxyadenosine + formate + L-methionine + 3 H(+). It functions in the pathway cofactor biosynthesis; thiamine diphosphate biosynthesis. In terms of biological role, catalyzes the synthesis of the hydroxymethylpyrimidine phosphate (HMP-P) moiety of thiamine from aminoimidazole ribotide (AIR) in a radical S-adenosyl-L-methionine (SAM)-dependent reaction. This chain is Phosphomethylpyrimidine synthase, found in Clostridium kluyveri (strain NBRC 12016).